A 220-amino-acid chain; its full sequence is Thiamine-phosphate synthase (220 aa).

Residues 38–42 and Asn70 each bind 4-amino-2-methyl-5-(diphosphooxymethyl)pyrimidine; that span reads QYRDK. Residues Asp71 and Asp90 each contribute to the Mg(2+) site. 4-amino-2-methyl-5-(diphosphooxymethyl)pyrimidine is bound at residue Thr109. 135–137 is a 2-[(2R,5Z)-2-carboxy-4-methylthiazol-5(2H)-ylidene]ethyl phosphate binding site; the sequence is TVS. Lys138 is a binding site for 4-amino-2-methyl-5-(diphosphooxymethyl)pyrimidine. 2-[(2R,5Z)-2-carboxy-4-methylthiazol-5(2H)-ylidene]ethyl phosphate-binding positions include Gly171 and 191–192; that span reads IS.

This sequence belongs to the thiamine-phosphate synthase family. The cofactor is Mg(2+).

It catalyses the reaction 2-[(2R,5Z)-2-carboxy-4-methylthiazol-5(2H)-ylidene]ethyl phosphate + 4-amino-2-methyl-5-(diphosphooxymethyl)pyrimidine + 2 H(+) = thiamine phosphate + CO2 + diphosphate. It carries out the reaction 2-(2-carboxy-4-methylthiazol-5-yl)ethyl phosphate + 4-amino-2-methyl-5-(diphosphooxymethyl)pyrimidine + 2 H(+) = thiamine phosphate + CO2 + diphosphate. The enzyme catalyses 4-methyl-5-(2-phosphooxyethyl)-thiazole + 4-amino-2-methyl-5-(diphosphooxymethyl)pyrimidine + H(+) = thiamine phosphate + diphosphate. It functions in the pathway cofactor biosynthesis; thiamine diphosphate biosynthesis; thiamine phosphate from 4-amino-2-methyl-5-diphosphomethylpyrimidine and 4-methyl-5-(2-phosphoethyl)-thiazole: step 1/1. Condenses 4-methyl-5-(beta-hydroxyethyl)thiazole monophosphate (THZ-P) and 2-methyl-4-amino-5-hydroxymethyl pyrimidine pyrophosphate (HMP-PP) to form thiamine monophosphate (TMP). This is Thiamine-phosphate synthase from Agrobacterium fabrum (strain C58 / ATCC 33970) (Agrobacterium tumefaciens (strain C58)).